Reading from the N-terminus, the 1443-residue chain is Sterol 3-beta-glucosyltransferase ATG26 (1443 aa).

The span at 1 to 13 shows a compositional bias: low complexity; that stretch reads MATQADDAAASQA. Disordered regions lie at residues 1-69 and 88-187; these read MATQ…MFMN and NDRF…LTLT. A compositionally biased stretch (basic and acidic residues) spans 18–32; sequence GDLKEHVHDELDKIQ. Positions 49-58 are enriched in acidic residues; it reads DSEDSDDEDN. The span at 104-117 shows a compositional bias: polar residues; that stretch reads QNTRTESIARTSIL. The segment covering 125–134 has biased composition (basic residues); it reads DKVHRRRKLS. The span at 164–173 shows a compositional bias: acidic residues; the sequence is EVADEADDEH. The region spanning 240–284 is the GRAM 1 domain; sequence LKEIFEFDEYEQVIEEYPCWLLQSVLLQGYMYITSKHICFYAYLP. Residues 289 to 385 form the PH domain; sequence EAVKSGYLSK…WVKSLQRVIF (97 aa). Positions 463 to 657 are disordered; the sequence is EQVITGDDHD…HGDRHHGIPH (195 aa). The segment covering 506–525 has biased composition (low complexity); it reads LAPMSPLSPRSPSQLSPRAS. Residues 585-614 are compositionally biased toward polar residues; sequence SFLQSSIENPSISTLSPSSYDEPSASQILQ. Residues 631–642 show a composition bias toward basic residues; that stretch reads SRKRDRSGKRTP. The GRAM 2 domain maps to 765–870; that stretch reads RFRAHFALPE…DCAVTLHQLM (106 aa). Residues 883–910 are a coiled coil; it reads DQEEQDDEEAAAAMAERDELQEARQDEF. UDP-alpha-D-glucose contacts are provided by S957, R958, D960, A1265, H1267, H1280, S1283, G1284, T1285, D1304, and Q1305. A disordered region spans residues 1385-1443; sequence NAEHGLAEDDDDTEESWTFVGRDEPDPDAVTKKLSDGLAGLGAAGDRPPPLGSQAPTVA. Over residues 1405-1419 the composition is skewed to basic and acidic residues; that stretch reads GRDEPDPDAVTKKLS.

It belongs to the glycosyltransferase 28 family.

Its subcellular location is the cytoplasm. It localises to the preautophagosomal structure membrane. It catalyses the reaction a sterol + UDP-alpha-D-glucose = a sterol 3-beta-D-glucoside + UDP + H(+). The enzyme catalyses ergosterol + UDP-alpha-D-glucose = ergosteryl 3-beta-D-glucoside + UDP + H(+). In terms of biological role, sterol glycosyltransferase responsible for the glycosylation of ergosterol to form ergosterol-glucoside. The protein is Sterol 3-beta-glucosyltransferase ATG26 of Gibberella zeae (strain ATCC MYA-4620 / CBS 123657 / FGSC 9075 / NRRL 31084 / PH-1) (Wheat head blight fungus).